A 189-amino-acid polypeptide reads, in one-letter code: Cancer/testis antigen family 45 member A1 (189 aa).

Residues 1 to 23 show a composition bias toward basic and acidic residues; that stretch reads MTDKTEKVAVDPETVFKRPRECD. 2 disordered regions span residues 1-27 and 83-118; these read MTDK…SPSY and RMMQ…SPKS.

The protein belongs to the CT45 family. Testis specific. Expressed in cancer cell lines.

It is found in the nucleus. This chain is Cancer/testis antigen family 45 member A1, found in Homo sapiens (Human).